The primary structure comprises 312 residues: Lipoyl synthase (312 aa).

Residues Cys51, Cys56, Cys62, Cys77, Cys81, Cys84, and Ser290 each contribute to the [4Fe-4S] cluster site. Residues 63 to 280 (WSRKTATYLA…RTIGTSLGLF (218 aa)) enclose the Radical SAM core domain.

It belongs to the radical SAM superfamily. Lipoyl synthase family. [4Fe-4S] cluster is required as a cofactor.

It is found in the cytoplasm. The enzyme catalyses [[Fe-S] cluster scaffold protein carrying a second [4Fe-4S](2+) cluster] + N(6)-octanoyl-L-lysyl-[protein] + 2 oxidized [2Fe-2S]-[ferredoxin] + 2 S-adenosyl-L-methionine + 4 H(+) = [[Fe-S] cluster scaffold protein] + N(6)-[(R)-dihydrolipoyl]-L-lysyl-[protein] + 4 Fe(3+) + 2 hydrogen sulfide + 2 5'-deoxyadenosine + 2 L-methionine + 2 reduced [2Fe-2S]-[ferredoxin]. The protein operates within protein modification; protein lipoylation via endogenous pathway; protein N(6)-(lipoyl)lysine from octanoyl-[acyl-carrier-protein]: step 2/2. In terms of biological role, catalyzes the radical-mediated insertion of two sulfur atoms into the C-6 and C-8 positions of the octanoyl moiety bound to the lipoyl domains of lipoate-dependent enzymes, thereby converting the octanoylated domains into lipoylated derivatives. This is Lipoyl synthase from Chlamydia caviae (strain ATCC VR-813 / DSM 19441 / 03DC25 / GPIC) (Chlamydophila caviae).